We begin with the raw amino-acid sequence, 1764 residues long: Latent-transforming growth factor beta-binding protein 2 (1764 aa).

Positions M1 to A35 are cleaved as a signal peptide. Residues P80–V140 form a disordered region. The interval I94 to V115 is heparin-binding. Positions R108–G128 are enriched in polar residues. The N-linked (GlcNAc...) asparagine glycan is linked to N175. Residues I181–E213 enclose the EGF-like 1 domain. Cystine bridges form between C185–C195, C189–C201, and C203–C212. The disordered stretch occupies residues E220 to A279. Residues A226–S243 form a heparin-binding region. Residues L257–S266 are compositionally biased toward pro residues. A glycan (N-linked (GlcNAc...) asparagine) is linked at N330. L331–V341 provides a ligand contact to heparin. Positions R383–H415 constitute an EGF-like 2 domain. Cystine bridges form between C387/C397, C391/C403, and C405/C414. An N-linked (GlcNAc...) asparagine glycan is attached at N408. Residues E484–V529 form a disordered region. S493 is subject to Phosphoserine. The region spanning G538–G590 is the TB 1 domain. 3 disulfide bridges follow: C540–C562, C549–C575, and C563–C578. N-linked (GlcNAc...) asparagine glycosylation is present at N602. Residues D608 to V648 enclose the EGF-like 3; calcium-binding domain. Intrachain disulfides connect C612–C623, C618–C632, C634–C647, C660–C682, C669–C695, C683–C698, and C684–C710. In terms of domain architecture, TB 2 spans G658–C710. Disordered stretches follow at residues K729–L759 and S786–Q809. Residues G834–T876 enclose the EGF-like 4 domain. Disulfide bonds link C838-C851, C846-C860, C862-C875, C881-C892, C886-C901, C903-C918, C924-C935, C930-C944, C946-C958, C964-C975, C970-C984, C987-C998, C1004-C1015, C1010-C1024, C1026-C1039, C1045-C1056, C1051-C1065, C1068-C1081, C1087-C1098, C1093-C1107, C1110-C1123, C1129-C1141, C1136-C1150, C1152-C1164, C1170-C1182, C1176-C1191, C1193-C1206, C1212-C1223, C1218-C1232, C1234-C1247, C1253-C1265, C1259-C1274, C1276-C1289, C1295-C1307, C1302-C1316, C1318-C1332, C1359-C1382, C1369-C1394, C1383-C1397, C1435-C1448, C1443-C1457, C1459-C1472, C1478-C1488, C1483-C1497, and C1499-C1512. Residues D877–Q919 form the EGF-like 5; calcium-binding domain. The EGF-like 6; calcium-binding domain occupies D920–Q959. The EGF-like 7; calcium-binding domain occupies D960–V999. Positions D1000–R1040 constitute an EGF-like 8; calcium-binding domain. The EGF-like 9; calcium-binding domain maps to D1041–E1082. The 42-residue stretch at D1083–E1124 folds into the EGF-like 10; calcium-binding domain. The EGF-like 11; calcium-binding domain maps to D1125 to E1165. N1160 carries an N-linked (GlcNAc...) asparagine glycan. One can recognise an EGF-like 12; calcium-binding domain in the interval D1166 to Q1207. An EGF-like 13; calcium-binding domain is found at D1208–V1248. Residues D1249–V1290 form the EGF-like 15; calcium-binding domain. N1255 carries an N-linked (GlcNAc...) asparagine glycan. The EGF-like 16; calcium-binding domain maps to D1291–R1333. The region spanning M1357–C1409 is the TB 3 domain. N1376 carries an N-linked (GlcNAc...) asparagine glycan. The 43-residue stretch at D1431 to Q1473 folds into the EGF-like 17; calcium-binding domain. One can recognise an EGF-like 18; calcium-binding domain in the interval D1474–V1513. N-linked (GlcNAc...) asparagine glycosylation is present at N1514. The TB 4 domain maps to D1530–C1582. Cystine bridges form between C1532/C1555, C1541/C1567, C1556/C1570, C1557/C1582, C1680/C1691, C1686/C1700, C1702/C1715, C1721/C1736, C1731/C1745, and C1747/C1760. The segment at A1585 to E1764 is C-terminal domain. The region spanning Q1676–V1716 is the EGF-like 19; calcium-binding domain. Positions D1717–A1761 constitute an EGF-like 20; calcium-binding domain.

The protein belongs to the LTBP family. In terms of assembly, forms part of the large latent transforming growth factor beta precursor complex; removal is essential for activation of complex. Interacts with SDC4. Interacts (via C-terminal domain) with FBN1 (via N-terminal domain) in a Ca(+2)-dependent manner. In terms of processing, N-Glycosylated. Contains hydroxylated asparagine residues. As to expression, expressed in cortical astrocytes and glioma cells. Expression is up-regulated by TGFB1.

It is found in the secreted. The protein resides in the extracellular space. The protein localises to the extracellular matrix. May play an integral structural role in elastic-fiber architectural organization and/or assembly. The polypeptide is Latent-transforming growth factor beta-binding protein 2 (Ltbp2) (Rattus norvegicus (Rat)).